The sequence spans 595 residues: Sialic acid-binding Ig-like lectin 12 (595 aa).

Positions 1 to 18 (MLLLLLLLPPLLCGRVGA) are cleaved as a signal peptide. 2 Ig-like V-type domains span residues 19 to 142 (KEQK…VNVT) and 143 to 269 (ASQD…VHVT). Topologically, residues 19-481 (KEQKDYLLTM…RPISGVTLGA (463 aa)) are extracellular. A disulfide bridge connects residues C44 and C104. Residues N140, N179, N230, and N290 are each glycosylated (N-linked (GlcNAc...) asparagine). 3 cysteine pairs are disulfide-bonded: C166/C299, C171/C231, and C293/C342. Positions 275-358 (PTFSIPGTLE…AGVTMTRAVR (84 aa)) constitute an Ig-like C2-type 1 domain. 3 N-linked (GlcNAc...) asparagine glycosylation sites follow: N360, N367, and N385. The Ig-like C2-type 2 domain maps to 365–462 (PQNLTMTVFQ…GSQHISLSLS (98 aa)). C401 and C446 are oxidised to a cystine. A helical membrane pass occupies residues 482–502 (FGGAGATALVFLYFCIIFVVV). The Cytoplasmic portion of the chain corresponds to 503 to 595 (RSCRKKSARP…YEYSEINIPK (93 aa)). Residues 512–560 (PAVGVGDTGMEDANAVRGSASQGPLIESPADDSPPHHAPPALATPSPEE) form a disordered region. The ITIM motif signature appears at 563–568 (IQYASL). Phosphotyrosine is present on residues Y565 and Y588. An SLAM-like motif motif is present at residues 586 to 591 (YEYSEI).

This sequence belongs to the immunoglobulin superfamily. SIGLEC (sialic acid binding Ig-like lectin) family. As to expression, isoform Short is highly expressed in spleen, small intestine and adrenal gland; it is lower expressed in thyroid, placenta, brain, stomach, bone marrow, spinal cord and breast. Isoform Long is highly expressed in spleen, small intestine and bone marrow; it is lower expressed in thyroid, placenta, thymus, trachea, stomach, lung, adrenal gland, fetal brain and testis.

The protein resides in the membrane. In terms of biological role, putative adhesion molecule that mediates sialic-acid dependent binding to cells. The sialic acid recognition site may be masked by cis interactions with sialic acids on the same cell surface. The sequence is that of Sialic acid-binding Ig-like lectin 12 (SIGLEC12) from Homo sapiens (Human).